Here is a 141-residue protein sequence, read N- to C-terminus: Transmembrane protein 216 (141 aa).

A run of 4 helical transmembrane segments spans residues 15 to 35 (ILFF…LLIF), 49 to 69 (LVLD…RLFF), 82 to 102 (LGIS…YLLL), and 115 to 135 (SILL…LATF).

Part of the tectonic-like complex (also named B9 complex). Interacts with TMEM107.

The protein localises to the membrane. The protein resides in the cytoplasm. It localises to the cytoskeleton. Its subcellular location is the cilium basal body. Its function is as follows. Part of the tectonic-like complex which is required for tissue-specific ciliogenesis and may regulate ciliary membrane composition. This chain is Transmembrane protein 216 (Tmem216), found in Rattus norvegicus (Rat).